Here is a 220-residue protein sequence, read N- to C-terminus: Ribonuclease HII (220 aa).

The RNase H type-2 domain maps to 32 to 220 (KHIVGIDEAG…FAPIKGRYSV (189 aa)). Aspartate 38, glutamate 39, and aspartate 130 together coordinate a divalent metal cation.

The protein belongs to the RNase HII family. It depends on Mn(2+) as a cofactor. Mg(2+) serves as cofactor.

It is found in the cytoplasm. The enzyme catalyses Endonucleolytic cleavage to 5'-phosphomonoester.. In terms of biological role, endonuclease that specifically degrades the RNA of RNA-DNA hybrids. The polypeptide is Ribonuclease HII (Brucella anthropi (strain ATCC 49188 / DSM 6882 / CCUG 24695 / JCM 21032 / LMG 3331 / NBRC 15819 / NCTC 12168 / Alc 37) (Ochrobactrum anthropi)).